The chain runs to 542 residues: ATP synthase subunit beta (542 aa).

The span at 1 to 50 shows a compositional bias: low complexity; the sequence is MAKTPAKAPAAAAKPAAVKKPAAPKAAAAPKAAAVATPAAKKPAAPKAAP. Positions 1–61 are disordered; the sequence is MAKTPAKAPA…SKVAGTREKP (61 aa). 216–223 provides a ligand contact to ATP; the sequence is GGAGVGKT.

The protein belongs to the ATPase alpha/beta chains family. F-type ATPases have 2 components, CF(1) - the catalytic core - and CF(0) - the membrane proton channel. CF(1) has five subunits: alpha(3), beta(3), gamma(1), delta(1), epsilon(1). CF(0) has three main subunits: a(1), b(2) and c(9-12). The alpha and beta chains form an alternating ring which encloses part of the gamma chain. CF(1) is attached to CF(0) by a central stalk formed by the gamma and epsilon chains, while a peripheral stalk is formed by the delta and b chains.

The protein localises to the cell inner membrane. The catalysed reaction is ATP + H2O + 4 H(+)(in) = ADP + phosphate + 5 H(+)(out). In terms of biological role, produces ATP from ADP in the presence of a proton gradient across the membrane. The catalytic sites are hosted primarily by the beta subunits. This Caulobacter sp. (strain K31) protein is ATP synthase subunit beta.